The following is an 896-amino-acid chain: Valine--tRNA ligase (896 aa).

The 'HIGH' region signature appears at 43–53 (PNVTGSLHIGH). The short motif at 545 to 549 (KMSKS) is the 'KMSKS' region element. Lys548 is an ATP binding site. A coiled-coil region spans residues 831-857 (DLDAERARLAKGIAAAEKERDGLAARL).

This sequence belongs to the class-I aminoacyl-tRNA synthetase family. ValS type 1 subfamily. Monomer.

Its subcellular location is the cytoplasm. The enzyme catalyses tRNA(Val) + L-valine + ATP = L-valyl-tRNA(Val) + AMP + diphosphate. Catalyzes the attachment of valine to tRNA(Val). As ValRS can inadvertently accommodate and process structurally similar amino acids such as threonine, to avoid such errors, it has a 'posttransfer' editing activity that hydrolyzes mischarged Thr-tRNA(Val) in a tRNA-dependent manner. This is Valine--tRNA ligase from Rhizorhabdus wittichii (strain DSM 6014 / CCUG 31198 / JCM 15750 / NBRC 105917 / EY 4224 / RW1) (Sphingomonas wittichii).